Reading from the N-terminus, the 425-residue chain is Polyribonucleotide 5'-hydroxyl-kinase Clp1 (425 aa).

ATP contacts are provided by residues Glu22, Lys62, and 124 to 129 (DVGKST).

It belongs to the Clp1 family. Clp1 subfamily. As to quaternary structure, component of the tRNA splicing endonuclease complex, composed of CLP1, TSEN2, TSEN15, TSEN34 and TSEN54. Component of pre-mRNA cleavage complex II (CF-II). Also associates with numerous components of the pre-mRNA cleavage complex I (CF-I/CFIm), including NUDT21, CPSF2, CPSF3, CPSF6 and CPSF7. Interacts with CSTF2 and SYMPK. It depends on Mg(2+) as a cofactor. Mn(2+) serves as cofactor. Requires Ni(2+) as cofactor.

The protein resides in the nucleus. The catalysed reaction is a 5'-end dephospho-2'-deoxyribonucleoside-DNA + ATP = a 5'-end 5'-phospho-2'-deoxyribonucleoside-DNA + ADP + H(+). It catalyses the reaction a 5'-end dephospho-ribonucleoside-RNA + ATP = a 5'-end 5'-phospho-ribonucleoside-RNA + ADP + H(+). Polynucleotide kinase that can phosphorylate the 5'-hydroxyl groups of double-stranded RNA (dsRNA), single-stranded RNA (ssRNA), double-stranded DNA (dsDNA) and double-stranded DNA:RNA hybrids. dsRNA is phosphorylated more efficiently than dsDNA, and the RNA component of a DNA:RNA hybrid is phosphorylated more efficiently than the DNA component. Plays a key role in both tRNA splicing and mRNA 3'-end formation. Component of the tRNA splicing endonuclease complex: phosphorylates the 5'-terminus of the tRNA 3'-exon during tRNA splicing; this phosphorylation event is a prerequisite for the subsequent ligation of the two exon halves and the production of a mature tRNA. Its role in tRNA splicing and maturation is required for cerebellar development. Component of the pre-mRNA cleavage complex II (CF-II), which seems to be required for mRNA 3'-end formation. Also phosphorylates the 5'-terminus of exogenously introduced short interfering RNAs (siRNAs), which is a necessary prerequisite for their incorporation into the RNA-induced silencing complex (RISC). However, endogenous siRNAs and microRNAs (miRNAs) that are produced by the cleavage of dsRNA precursors by DICER1 already contain a 5'-phosphate group, so this protein may be dispensible for normal RNA-mediated gene silencing. This chain is Polyribonucleotide 5'-hydroxyl-kinase Clp1, found in Homo sapiens (Human).